Consider the following 1113-residue polypeptide: Protein KIBRA (1113 aa).

WW domains are found at residues 6 to 39 (LPLPEGWEEARDFDGKVYYIDHTNRTTSWIDPRD) and 53 to 86 (DELPLGWEEAYDPQVGDYFIDHNTKTTQIEDPRV). 2 coiled-coil regions span residues 107-193 (LSAQ…RGFQ) and 293-431 (NSNN…SSMQ). Position 141 is a phosphoserine (Ser-141). Disordered stretches follow at residues 429 to 448 (SMQSLSSGSSPGSLTSSRGS) and 522 to 547 (RSLSGTPKSMTSLSPRSSLSSPSPPC). Residues 522–532 (RSLSGTPKSMT) show a composition bias toward polar residues. Residues 533–542 (SLSPRSSLSS) are compositionally biased toward low complexity. Ser-535 bears the Phosphoserine mark. At Ser-542 the chain carries Phosphoserine; by CDK1. In terms of domain architecture, C2 spans 658–781 (GATRIQIALK…RSGERSTRWY (124 aa)). Positions 825 to 975 (LEKRQEGRSS…RSVRMKRPSS (151 aa)) are disordered. An interaction with histone H3 region spans residues 839–1113 (EDSWRYEETS…NIPALSADDV (275 aa)). Acidic residues predominate over residues 847–870 (TSENEAVAEEEEEEVEEEEGEEDV). A Phosphoserine modification is found at Ser-899. Phosphothreonine is present on Thr-912. Residues 924–938 (IIRSKTFSPGPQSQY) are compositionally biased toward polar residues. Ser-927 carries the phosphoserine modification. Residue Thr-929 is modified to Phosphothreonine. Residue Ser-931 is modified to Phosphoserine; by CDK1. Phosphoserine is present on Ser-947. 2 interaction with PRKCZ regions span residues 953–996 (SKKP…LDLQ) and 956–975 (PPFVRNSLERRSVRMKRPSS). Residues Ser-975 and Ser-978 each carry the phosphoserine; by PKC/PRKCZ modification. Residues 1001-1032 (WHSQLTQEISVLKELKEQLEQAKSHGEKELPQ) are a coiled coil. The ADDV motif motif lies at 1111 to 1113 (DDV).

The protein belongs to the WWC family. KIBRA subfamily. Homodimer. Forms heterodimers with WWC2 and WWC3. Interacts with DDN. Interacts with DYNLL1 and histone H3. The interaction with DYNLL1 is mandatory for the recruitment and transactivation functions of ESR1 or DYNLL1 to the target chromatin and the interaction with histone H3 ensures proper regulatory interaction of WWC1-DYNLL1-ESR1 complexes with target chromatin. Interacts (via WW domains) with DDR1 (via PPxY motif) in a collagen-regulated manner. Interacts with PRKCZ (via the protein kinase domain). Forms a tripartite complex with DDR1 and PRKCZ, but predominantly in the absence of collagen. Interacts (via the ADDV motif) with PATJ (via PDZ domain 8). Interacts (via WW domains) with SYNPO (via PPxY motifs). Interacts with NF2 and SNX4. Interacts with DLC1 and PRKCZ. Interacts (via WW domains) with LATS1 and LATS2. Phosphorylation at Ser-542 and Ser-931 by CDK1 in response to spindle damage stress regulates mitotic exit, these two sites are dephosphorylated by CDC14B. Expressed in mammary epithelial cells and breast cancer cell lines. Found in the luminal epithelium surrounding the ducts in the normal breast. In the brain, expressed in somatodendritic compartment of neurons in the cortex and hippocampus and in the cerebellum it is found in the Purkinje cells and some granule cells (at protein level). Detected in brain, heart, colon and kidney. In the kidney, expressed in glomerular podocytes, in some tubules and in the collecting duct.

The protein localises to the cytoplasm. Its subcellular location is the perinuclear region. The protein resides in the nucleus. It localises to the cell projection. It is found in the ruffle membrane. The protein localises to the cytosol. Functionally, regulator of the Hippo signaling pathway, also known as the Salvador-Warts-Hippo (SWH) pathway. Enhances phosphorylation of LATS1 and YAP1 and negatively regulates cell proliferation and organ growth due to a suppression of the transcriptional activity of YAP1, the major effector of the Hippo pathway. Along with NF2 can synergistically induce the phosphorylation of LATS1 and LATS2 and function in the regulation of Hippo signaling pathway. Acts as a transcriptional coactivator of ESR1 which plays an essential role in DYNLL1-mediated ESR1 transactivation. Regulates collagen-stimulated activation of the ERK/MAPK cascade. Modulates directional migration of podocytes. Plays a role in cognition and memory performance. Plays an important role in regulating AMPA-selective glutamate receptors (AMPARs) trafficking underlying synaptic plasticity and learning. This chain is Protein KIBRA, found in Homo sapiens (Human).